Reading from the N-terminus, the 476-residue chain is Arginine biosynthesis bifunctional protein ArgJ, mitochondrial (476 aa).

The substrate site is built by threonine 204, lysine 233, threonine 244, glutamate 331, asparagine 471, and threonine 476. Threonine 244 serves as the catalytic Nucleophile.

This sequence belongs to the ArgJ family. Heterodimer of an alpha and a beta chain. The alpha and beta chains are autoproteolytically processed from a single precursor protein within the mitochondrion.

It localises to the mitochondrion matrix. It catalyses the reaction N(2)-acetyl-L-ornithine + L-glutamate = N-acetyl-L-glutamate + L-ornithine. It carries out the reaction L-glutamate + acetyl-CoA = N-acetyl-L-glutamate + CoA + H(+). The protein operates within amino-acid biosynthesis; L-arginine biosynthesis; L-ornithine and N-acetyl-L-glutamate from L-glutamate and N(2)-acetyl-L-ornithine (cyclic): step 1/1. Its pathway is amino-acid biosynthesis; L-arginine biosynthesis; N(2)-acetyl-L-ornithine from L-glutamate: step 1/4. Its function is as follows. Catalyzes two activities which are involved in the cyclic version of arginine biosynthesis: the synthesis of acetylglutamate from glutamate and acetyl-CoA, and of ornithine by transacetylation between acetylornithine and glutamate. The protein is Arginine biosynthesis bifunctional protein ArgJ, mitochondrial of Arthroderma otae (strain ATCC MYA-4605 / CBS 113480) (Microsporum canis).